The primary structure comprises 168 residues: Large ribosomal subunit protein uL24 (168 aa).

A disordered region spans residues 112 to 168 (LEGKDPRKQPKEAPKAAEKPAKEEPKKETPKAEEKPAKEEPKETKVEKKSEEKEDEN).

This sequence belongs to the universal ribosomal protein uL24 family. Part of the 50S ribosomal subunit.

Functionally, one of two assembly initiator proteins, it binds directly to the 5'-end of the 23S rRNA, where it nucleates assembly of the 50S subunit. Its function is as follows. Located at the polypeptide exit tunnel on the outside of the subunit. The chain is Large ribosomal subunit protein uL24 from Nitrosopumilus maritimus (strain SCM1).